We begin with the raw amino-acid sequence, 99 residues long: Small ribosomal subunit protein uS14m (99 aa).

It belongs to the universal ribosomal protein uS14 family.

It localises to the mitochondrion. This is Small ribosomal subunit protein uS14m (RPS14) from Acanthamoeba castellanii (Amoeba).